The following is a 255-amino-acid chain: Pyrroloquinoline-quinone synthase (255 aa).

The protein belongs to the PqqC family.

The enzyme catalyses 6-(2-amino-2-carboxyethyl)-7,8-dioxo-1,2,3,4,7,8-hexahydroquinoline-2,4-dicarboxylate + 3 O2 = pyrroloquinoline quinone + 2 H2O2 + 2 H2O + H(+). It functions in the pathway cofactor biosynthesis; pyrroloquinoline quinone biosynthesis. Ring cyclization and eight-electron oxidation of 3a-(2-amino-2-carboxyethyl)-4,5-dioxo-4,5,6,7,8,9-hexahydroquinoline-7,9-dicarboxylic-acid to PQQ. The polypeptide is Pyrroloquinoline-quinone synthase (Cereibacter sphaeroides (strain ATCC 17023 / DSM 158 / JCM 6121 / CCUG 31486 / LMG 2827 / NBRC 12203 / NCIMB 8253 / ATH 2.4.1.) (Rhodobacter sphaeroides)).